Reading from the N-terminus, the 352-residue chain is Lipopolysaccharide core biosynthesis mannosyltransferase LpcC (352 aa).

Belongs to the glycosyltransferase group 1 family. Glycosyltransferase 4 subfamily.

It functions in the pathway bacterial outer membrane biogenesis; LPS core biosynthesis. Functionally, acts at transfer of mannose group to a 3-deoxy-D-mono octulonic acid (KDO) via an alpha-1,5 linkage. This chain is Lipopolysaccharide core biosynthesis mannosyltransferase LpcC (lpcC), found in Rhizobium leguminosarum bv. viciae.